The chain runs to 979 residues: Receptor-type tyrosine-protein phosphatase-like N (979 aa).

Residues 1-34 (MRRPRRPGGLGGSGGLRLLLCLLLLSSRPGGCSA) form the signal peptide. The RESP18 homology domain stretch occupies residues 35-131 (VSAHGCLFDR…RPRDRSGLAP (97 aa)). Residues 35 to 575 (VSAHGCLFDR…QTAHSTSPMR (541 aa)) are Lumenal-facing. Cysteine 53 and cysteine 62 are disulfide-bonded. Basic and acidic residues-rich tracts occupy residues 112–127 (RIPR…RDRS) and 304–323 (RAED…RGEK). 3 disordered regions span residues 112–173 (RIPR…SSSL), 289–329 (SRAR…SPAV), and 393–439 (VEGR…ARPP). Residue serine 308 is modified to Phosphoserine. Residues 415–433 (SPTSSEVQQVPSPVSSEPP) are compositionally biased toward low complexity. O-linked (GalNAc...) threonine glycosylation is present at threonine 441. A sufficient for dimerization of proICA512 region spans residues 449–575 (SPLGQSQPTV…QTAHSTSPMR (127 aa)). 2 N-linked (GlcNAc...) asparagine glycosylation sites follow: asparagine 506 and asparagine 524. A helical transmembrane segment spans residues 576-600 (SVLLTLVALAGVAGLLVALAVALCV). The interval 601–732 (RQHARQQDKE…PNTCATAQGE (132 aa)) is sufficient for dimerization of proICA512. At 601–979 (RQHARQQDKE…VNAILKALPQ (379 aa)) the chain is on the cytoplasmic side. The tract at residues 643–680 (NRAEGPPEPSRVSSVSSQFSDAAQASPSSHSSTPSWCE) is disordered. Positions 652–677 (SRVSSVSSQFSDAAQASPSSHSSTPS) are enriched in low complexity. Residues 709 to 969 (LAKEWQALCA…EFALTAVAEE (261 aa)) enclose the Tyrosine-protein phosphatase domain. Lysine 754 is covalently cross-linked (Glycyl lysine isopeptide (Lys-Gly) (interchain with G-Cter in SUMO)).

This sequence belongs to the protein-tyrosine phosphatase family. Receptor class 8 subfamily. In terms of assembly, homodimer; shown for the unprocessed protein (proICA512) in the endoplasmic reticulum and resolved during protein maturation as ICA512-TMF seems to be predominantly monomeric in secretory granules; however, ICA512-CCF interacts with ICA512-TMF disrupting the ICA512-TMF:SNTB2 complex. The isolated lumenal RESP18 homology domain has been shown to form disulfide-linked homooligomers. Interacts (via cytoplasmic domain) with phosphorylated SNTB2; this protects PTPRN against cleavage by CAPN1 to produce ICA512-CCF. Dephosphorylation of SNTB2 upon insulin stimulation disrupts the interaction and results in PTPRN cleavage. Interacts with SNX19. ICA512-CCF interacts with PIAS4; in the nucleus. Interacts with STAT5B (phosphorylated); down-regulated by ICA512-CCF sumoylation; ICA512-CCF prevents STAT5B dephosphorylation; ICA512-CCF mediates interaction of STAT5B with PIAS4. Interacts (via RESP18 homology domain) with insulin and proinsulin. Interacts with PTPRN2, PTPRA and PTPRE. N-glycosylated. In terms of processing, O-glycosylated with core 1 or possibly core 8 glycans. Post-translationally, subject to proteolytic cleavage at multiple sites. Subject to cleavage on a pair of basic residues. On exocytosis of secretory granules in pancreatic beta-cells ICA512-TMF is transiently inserted in the plasma-membrane and cleaved by mu-type calpain CPN1 to yield ICA512-CCF. Sumoylated at two sites including Lys-754. Sumoylation decreases interaction with STAT5. In terms of tissue distribution, expression is restricted to neuroendocrine cells. Found in pancreas, brain and pituitary.

It is found in the membrane. The protein localises to the cytoplasmic vesicle. Its subcellular location is the secretory vesicle membrane. It localises to the perikaryon. The protein resides in the cell projection. It is found in the axon. The protein localises to the synapse. Its subcellular location is the cell membrane. It localises to the endosome. The protein resides in the nucleus. In terms of biological role, plays a role in vesicle-mediated secretory processes. Required for normal accumulation of secretory vesicles in hippocampus, pituitary and pancreatic islets. Required for the accumulation of normal levels of insulin-containing vesicles and preventing their degradation. Plays a role in insulin secretion in response to glucose stimuli. Required for normal accumulation of the neurotransmitters norepinephrine, dopamine and serotonin in the brain. In females, but not in males, required for normal accumulation and secretion of pituitary hormones, such as luteinizing hormone (LH) and follicle-stimulating hormone (FSH). Required to maintain normal levels of renin expression and renin release. Seems to lack intrinsic enzyme activity. May regulate catalytic active protein-tyrosine phosphatases such as PTPRA through dimerization. Its function is as follows. ICA512-TMF regulates dynamics and exocytosis of insulin secretory granules (SGs); binding of ICA512-TMF to SNTB2/beta-2-syntrophin is proposed to restrain SGs mobility and exocytosis by tethering them to the actin cytoskeleton depending on UTRN; the function is inhibited by cytoplasmic ICA512-CFF dimerizing with ICA512-TMF and displacing SNTB2. Functionally, ICA512-CCF translocated to the nucleus promotes expression of insulin and other granule-related genes; the function implicates binding to and regulating activity of STAT5B probably by preventing its dephosphorylation and potentially by inducing its sumoylation by recruiting PIAS4. Enhances pancreatic beta-cell proliferation by converging with signaling by STAT5B and STAT3. ICA512-CCF located in the cytoplasm regulates dynamics and exocytosis of insulin secretory granules (SGs) by dimerizing with ICA512-TMF and displacing SNTB2 thus enhancing SGs mobility and exocytosis. This Homo sapiens (Human) protein is Receptor-type tyrosine-protein phosphatase-like N (PTPRN).